A 460-amino-acid chain; its full sequence is Piperamide synthase (460 aa).

The segment at 1-23 is disordered; sequence MASSQLEFNVERKQPELLGPAEP. Catalysis depends on proton acceptor residues His-168 and Asp-383. A Microbody targeting signal motif is present at residues 458–460; that stretch reads SRM.

The protein belongs to the plant acyltransferase family. As to quaternary structure, monomer. Confined to immature fruits perisperm. Also detectable in roots.

It localises to the cytoplasm. It carries out the reaction piperidine + (E,E)-piperoyl-CoA = piperine + CoA + H(+). The protein operates within aromatic compound metabolism. Involved in the biosynthesis of aromatic piperamides natural products such as piperine (1-piperoyl-piperidine), the pungent principle contributing, together with several terpenoids, to the aromatic properties of black pepper fruits, and displaying numerous pharmacological activities such as antiproliferative, antitumor, antiangiogenesis, antioxidant, antidiabetic, antiobesity, cardioprotective, antimicrobial, antiaging, and immunomodulatory effects. Can use piperidine and benzylamine as acceptors and various CoA-esters with aliphatic and aromatic amines as CoA-donors, including piperoyl-CoA, hexanoyl-CoA and octanoyl-CoA, and, to a lower extent, benzoyl-CoA. Mediates the conversion of piperidine to three piperine isomers in the presence of piperoyl-CoA. Its ability to convert in vitro piperidine to hexanoylpiperidine in the presence of hexanoyl-CoA, and to octanoylpiperidine in the presence of octanoyl-CoA is not confirmed in vivo according to fruits metabolome analysis. This chain is Piperamide synthase, found in Piper nigrum (Black pepper).